The sequence spans 129 residues: Large ribosomal subunit protein bL12 (129 aa).

The protein belongs to the bacterial ribosomal protein bL12 family. As to quaternary structure, homodimer. Part of the ribosomal stalk of the 50S ribosomal subunit. Forms a multimeric L10(L12)X complex, where L10 forms an elongated spine to which 2 to 4 L12 dimers bind in a sequential fashion. Binds GTP-bound translation factors.

Functionally, forms part of the ribosomal stalk which helps the ribosome interact with GTP-bound translation factors. Is thus essential for accurate translation. The protein is Large ribosomal subunit protein bL12 of Fervidobacterium nodosum (strain ATCC 35602 / DSM 5306 / Rt17-B1).